Here is a 394-residue protein sequence, read N- to C-terminus: MAKAKFERTKPHVNIGTIGHVDHGKTSLTAAITIILAKTGGAKATAYDQIDAAPEEKERGITISTAHVEYETNNRHYAHVDCPGHADYVKNMITGAAQMDGAILVVSAADGPMPQTREHILLAKQVGVPAMVVFLNKVDMVDDPDLLELVEMEVRELLSKYGFPGNEIPIIKGSALQALEGKPEGEKAINELMNAVDSYIPQPIRATDKPFLMPIEDVFSISGRGTVVTGRVESGIIKVGEEIEIVGLKNTQKTTCTGVEMFRKLLDEGQSGDNVGILLRGTKREEVERGQVLAKPGSIKPHDKFEAEVYVLSKEEGGRHTPFTNDYRPQFYFRTTDVTGTIKLPFDKQMVMPGDNATFSVELIKPIAMQEGLKFSIREGGRTVGAGVVTRINN.

The region spanning 10–204 (KPHVNIGTIG…AVDSYIPQPI (195 aa)) is the tr-type G domain. A G1 region spans residues 19–26 (GHVDHGKT). 19–26 (GHVDHGKT) is a binding site for GTP. Mg(2+) is bound at residue Thr26. The interval 60–64 (GITIS) is G2. Residues 81 to 84 (DCPG) form a G3 region. GTP-binding positions include 81 to 85 (DCPGH) and 136 to 139 (NKVD). Residues 136-139 (NKVD) are G4. The segment at 174–176 (SAL) is G5.

This sequence belongs to the TRAFAC class translation factor GTPase superfamily. Classic translation factor GTPase family. EF-Tu/EF-1A subfamily. Monomer.

The protein localises to the cytoplasm. It carries out the reaction GTP + H2O = GDP + phosphate + H(+). Functionally, GTP hydrolase that promotes the GTP-dependent binding of aminoacyl-tRNA to the A-site of ribosomes during protein biosynthesis. The chain is Elongation factor Tu from Rickettsia typhi (strain ATCC VR-144 / Wilmington).